The primary structure comprises 310 residues: Homoserine kinase (310 aa).

P95 to A105 contributes to the ATP binding site.

Belongs to the GHMP kinase family. Homoserine kinase subfamily.

The protein resides in the cytoplasm. It catalyses the reaction L-homoserine + ATP = O-phospho-L-homoserine + ADP + H(+). Its pathway is amino-acid biosynthesis; L-threonine biosynthesis; L-threonine from L-aspartate: step 4/5. Its function is as follows. Catalyzes the ATP-dependent phosphorylation of L-homoserine to L-homoserine phosphate. In Corynebacterium kroppenstedtii (strain DSM 44385 / JCM 11950 / CIP 105744 / CCUG 35717), this protein is Homoserine kinase.